An 860-amino-acid chain; its full sequence is Leucine--tRNA ligase (860 aa).

The 'HIGH' region motif lies at Pro-42–His-52. The 'KMSKS' region signature appears at Lys-619–Ser-623. Position 622 (Lys-622) interacts with ATP.

This sequence belongs to the class-I aminoacyl-tRNA synthetase family.

Its subcellular location is the cytoplasm. The catalysed reaction is tRNA(Leu) + L-leucine + ATP = L-leucyl-tRNA(Leu) + AMP + diphosphate. The polypeptide is Leucine--tRNA ligase (Shigella boydii serotype 18 (strain CDC 3083-94 / BS512)).